We begin with the raw amino-acid sequence, 406 residues long: 4-hydroxy-3-methylbut-2-en-1-yl diphosphate synthase (ferredoxin) (406 aa).

Cysteine 315, cysteine 318, cysteine 349, and glutamate 356 together coordinate [4Fe-4S] cluster.

Belongs to the IspG family. It depends on [4Fe-4S] cluster as a cofactor.

The enzyme catalyses (2E)-4-hydroxy-3-methylbut-2-enyl diphosphate + 2 oxidized [2Fe-2S]-[ferredoxin] + H2O = 2-C-methyl-D-erythritol 2,4-cyclic diphosphate + 2 reduced [2Fe-2S]-[ferredoxin] + H(+). It functions in the pathway isoprenoid biosynthesis; isopentenyl diphosphate biosynthesis via DXP pathway; isopentenyl diphosphate from 1-deoxy-D-xylulose 5-phosphate: step 5/6. Its function is as follows. Converts 2C-methyl-D-erythritol 2,4-cyclodiphosphate (ME-2,4cPP) into 1-hydroxy-2-methyl-2-(E)-butenyl 4-diphosphate. The polypeptide is 4-hydroxy-3-methylbut-2-en-1-yl diphosphate synthase (ferredoxin) (Gloeothece citriformis (strain PCC 7424) (Cyanothece sp. (strain PCC 7424))).